The sequence spans 209 residues: Imidazole glycerol phosphate synthase subunit HisH (209 aa).

Positions 1 to 205 constitute a Glutamine amidotransferase type-1 domain; it reads MIAIIDYGMG…KGVVETWKSS (205 aa). C79 serves as the catalytic Nucleophile. Catalysis depends on residues H180 and E182.

In terms of assembly, heterodimer of HisH and HisF.

It is found in the cytoplasm. The catalysed reaction is 5-[(5-phospho-1-deoxy-D-ribulos-1-ylimino)methylamino]-1-(5-phospho-beta-D-ribosyl)imidazole-4-carboxamide + L-glutamine = D-erythro-1-(imidazol-4-yl)glycerol 3-phosphate + 5-amino-1-(5-phospho-beta-D-ribosyl)imidazole-4-carboxamide + L-glutamate + H(+). The enzyme catalyses L-glutamine + H2O = L-glutamate + NH4(+). It participates in amino-acid biosynthesis; L-histidine biosynthesis; L-histidine from 5-phospho-alpha-D-ribose 1-diphosphate: step 5/9. Its function is as follows. IGPS catalyzes the conversion of PRFAR and glutamine to IGP, AICAR and glutamate. The HisH subunit catalyzes the hydrolysis of glutamine to glutamate and ammonia as part of the synthesis of IGP and AICAR. The resulting ammonia molecule is channeled to the active site of HisF. This chain is Imidazole glycerol phosphate synthase subunit HisH, found in Bacillus anthracis (strain CDC 684 / NRRL 3495).